The following is a 122-amino-acid chain: Large ribosomal subunit protein uL18 (122 aa).

Basic residues predominate over residues 1–20; it reads MLKKVSKNTNRQGRHQRVRN. The disordered stretch occupies residues 1–22; the sequence is MLKKVSKNTNRQGRHQRVRNKI.

The protein belongs to the universal ribosomal protein uL18 family. As to quaternary structure, part of the 50S ribosomal subunit; part of the 5S rRNA/L5/L18/L25 subcomplex. Contacts the 5S and 23S rRNAs.

In terms of biological role, this is one of the proteins that bind and probably mediate the attachment of the 5S RNA into the large ribosomal subunit, where it forms part of the central protuberance. The sequence is that of Large ribosomal subunit protein uL18 from Alkaliphilus metalliredigens (strain QYMF).